The chain runs to 82 residues: Small ribosomal subunit protein bS16 (82 aa).

Belongs to the bacterial ribosomal protein bS16 family.

The sequence is that of Small ribosomal subunit protein bS16 from Crocosphaera subtropica (strain ATCC 51142 / BH68) (Cyanothece sp. (strain ATCC 51142)).